Here is a 266-residue protein sequence, read N- to C-terminus: Tryptophan synthase alpha chain (266 aa).

Active-site proton acceptor residues include Glu-49 and Asp-60.

The protein belongs to the TrpA family. In terms of assembly, tetramer of two alpha and two beta chains.

It carries out the reaction (1S,2R)-1-C-(indol-3-yl)glycerol 3-phosphate + L-serine = D-glyceraldehyde 3-phosphate + L-tryptophan + H2O. It functions in the pathway amino-acid biosynthesis; L-tryptophan biosynthesis; L-tryptophan from chorismate: step 5/5. Functionally, the alpha subunit is responsible for the aldol cleavage of indoleglycerol phosphate to indole and glyceraldehyde 3-phosphate. The polypeptide is Tryptophan synthase alpha chain (Synechococcus elongatus (strain ATCC 33912 / PCC 7942 / FACHB-805) (Anacystis nidulans R2)).